A 427-amino-acid chain; its full sequence is Phosphatidylglycerol--prolipoprotein diacylglyceryl transferase (427 aa).

The next 4 helical transmembrane spans lie at V21 to G41, G53 to Y73, I96 to I116, and G122 to I142. R144 contributes to the a 1,2-diacyl-sn-glycero-3-phospho-(1'-sn-glycerol) binding site. The next 2 helical transmembrane spans lie at V189–V209 and I256–P276. A disordered region spans residues E280–R427. The segment covering E299 to A330 has biased composition (low complexity). Over residues R332 to S346 the composition is skewed to basic and acidic residues. A compositionally biased stretch (acidic residues) spans E347–E404. Positions E411 to R427 are enriched in basic and acidic residues.

It belongs to the Lgt family.

It localises to the cell membrane. It catalyses the reaction L-cysteinyl-[prolipoprotein] + a 1,2-diacyl-sn-glycero-3-phospho-(1'-sn-glycerol) = an S-1,2-diacyl-sn-glyceryl-L-cysteinyl-[prolipoprotein] + sn-glycerol 1-phosphate + H(+). It participates in protein modification; lipoprotein biosynthesis (diacylglyceryl transfer). Its function is as follows. Catalyzes the transfer of the diacylglyceryl group from phosphatidylglycerol to the sulfhydryl group of the N-terminal cysteine of a prolipoprotein, the first step in the formation of mature lipoproteins. The protein is Phosphatidylglycerol--prolipoprotein diacylglyceryl transferase of Mycolicibacterium paratuberculosis (strain ATCC BAA-968 / K-10) (Mycobacterium paratuberculosis).